The primary structure comprises 373 residues: 3-dehydroquinate synthase (373 aa).

NAD(+)-binding positions include 67-72 (EGEETK), 101-105 (GVILD), 125-126 (TT), Lys138, and Lys147. Residues Glu180, His240, and His256 each coordinate Zn(2+).

It belongs to the sugar phosphate cyclases superfamily. Dehydroquinate synthase family. NAD(+) is required as a cofactor. Requires Co(2+) as cofactor. Zn(2+) serves as cofactor.

It is found in the cytoplasm. The enzyme catalyses 7-phospho-2-dehydro-3-deoxy-D-arabino-heptonate = 3-dehydroquinate + phosphate. It participates in metabolic intermediate biosynthesis; chorismate biosynthesis; chorismate from D-erythrose 4-phosphate and phosphoenolpyruvate: step 2/7. In terms of biological role, catalyzes the conversion of 3-deoxy-D-arabino-heptulosonate 7-phosphate (DAHP) to dehydroquinate (DHQ). This chain is 3-dehydroquinate synthase, found in Chlamydia trachomatis serovar A (strain ATCC VR-571B / DSM 19440 / HAR-13).